The chain runs to 263 residues: Hydroxyethylthiazole kinase (263 aa).

Met-45 is a binding site for substrate. ATP-binding residues include Arg-121 and Ser-167. Gly-194 contacts substrate.

Belongs to the Thz kinase family. The cofactor is Mg(2+).

The enzyme catalyses 5-(2-hydroxyethyl)-4-methylthiazole + ATP = 4-methyl-5-(2-phosphooxyethyl)-thiazole + ADP + H(+). It functions in the pathway cofactor biosynthesis; thiamine diphosphate biosynthesis; 4-methyl-5-(2-phosphoethyl)-thiazole from 5-(2-hydroxyethyl)-4-methylthiazole: step 1/1. Catalyzes the phosphorylation of the hydroxyl group of 4-methyl-5-beta-hydroxyethylthiazole (THZ). The chain is Hydroxyethylthiazole kinase from Vibrio campbellii (strain ATCC BAA-1116).